The primary structure comprises 468 residues: uncharacterized protein (468 aa).

The interval 447–468 is disordered; that stretch reads AVHVSNGDKPKVALPDTQLGSH.

It belongs to the mycobacterial PPE family.

This is an uncharacterized protein from Mycobacterium tuberculosis (strain CDC 1551 / Oshkosh).